We begin with the raw amino-acid sequence, 101 residues long: Translation initiation factor IF-1, chloroplastic (101 aa).

Residues 1–10 show a composition bias toward polar residues; that stretch reads MNQLKKSFSP. Residues 1–35 form a disordered region; the sequence is MNQLKKSFSPTEGKKDQNNLINDPQKNKQKKQKKL. Positions 26-101 constitute an S1-like domain; that stretch reads KNKQKKQKKL…TKGRITYRHR (76 aa).

It belongs to the IF-1 family. Component of the 30S ribosomal translation pre-initiation complex which assembles on the 30S ribosome in the order IF-2 and IF-3, IF-1 and N-formylmethionyl-tRNA(fMet); mRNA recruitment can occur at any time during PIC assembly.

The protein resides in the plastid. Its subcellular location is the chloroplast. Functionally, one of the essential components for the initiation of protein synthesis. Stabilizes the binding of IF-2 and IF-3 on the 30S subunit to which N-formylmethionyl-tRNA(fMet) subsequently binds. Helps modulate mRNA selection, yielding the 30S pre-initiation complex (PIC). Upon addition of the 50S ribosomal subunit IF-1, IF-2 and IF-3 are released leaving the mature 70S translation initiation complex. The protein is Translation initiation factor IF-1, chloroplastic of Tetradesmus obliquus (Green alga).